The following is a 117-amino-acid chain: Large ribosomal subunit protein bL20 (117 aa).

This sequence belongs to the bacterial ribosomal protein bL20 family.

Functionally, binds directly to 23S ribosomal RNA and is necessary for the in vitro assembly process of the 50S ribosomal subunit. It is not involved in the protein synthesizing functions of that subunit. The polypeptide is Large ribosomal subunit protein bL20 (Rickettsia felis (strain ATCC VR-1525 / URRWXCal2) (Rickettsia azadi)).